Consider the following 180-residue polypeptide: Ribulose bisphosphate carboxylase small subunit, chloroplastic (180 aa).

Residues 1–56 constitute a chloroplast transit peptide; it reads MASSIMSSAAVATRSNGAQASMVAPFTGLKSNASFPVSRKTNLDITSIASNGGRVR.

It belongs to the RuBisCO small chain family. In terms of assembly, heterohexadecamer of 8 large and 8 small subunits.

Its subcellular location is the plastid. The protein localises to the chloroplast. RuBisCO catalyzes two reactions: the carboxylation of D-ribulose 1,5-bisphosphate, the primary event in carbon dioxide fixation, as well as the oxidative fragmentation of the pentose substrate. Both reactions occur simultaneously and in competition at the same active site. Although the small subunit is not catalytic it is essential for maximal activity. The polypeptide is Ribulose bisphosphate carboxylase small subunit, chloroplastic (Stellaria longipes (Longstalk starwort)).